The sequence spans 1412 residues: DNA-directed RNA polymerase subunit beta' (1412 aa).

Zn(2+)-binding residues include Cys70, Cys72, Cys85, and Cys88. Residues Asp460, Asp462, and Asp464 each coordinate Mg(2+). Zn(2+) contacts are provided by Cys814, Cys888, Cys895, and Cys898. The interval 1378 to 1412 is disordered; sequence EREAARQLANPFEDAPVTVDADAPQSDAGQEGSAE.

It belongs to the RNA polymerase beta' chain family. As to quaternary structure, the RNAP catalytic core consists of 2 alpha, 1 beta, 1 beta' and 1 omega subunit. When a sigma factor is associated with the core the holoenzyme is formed, which can initiate transcription. It depends on Mg(2+) as a cofactor. Zn(2+) is required as a cofactor.

The catalysed reaction is RNA(n) + a ribonucleoside 5'-triphosphate = RNA(n+1) + diphosphate. Its function is as follows. DNA-dependent RNA polymerase catalyzes the transcription of DNA into RNA using the four ribonucleoside triphosphates as substrates. This Bordetella petrii (strain ATCC BAA-461 / DSM 12804 / CCUG 43448) protein is DNA-directed RNA polymerase subunit beta'.